Here is a 243-residue protein sequence, read N- to C-terminus: Endochitinase (243 aa).

3 disulfide bridges follow: Cys-23-Cys-85, Cys-97-Cys-105, and Cys-223-Cys-236. Residue Glu-67 is the Proton donor of the active site.

The protein localises to the vacuole. The catalysed reaction is Random endo-hydrolysis of N-acetyl-beta-D-glucosaminide (1-&gt;4)-beta-linkages in chitin and chitodextrins.. Defense against chitin-containing fungal pathogens. Shows activity on chitin, tetra-N-acetylglucosamine and chitosan. This is Endochitinase from Carica papaya (Papaya).